The following is a 509-amino-acid chain: Tyrosine-protein kinase Lck (509 aa).

Residue G2 is the site of N-myristoyl glycine attachment. The interactions with CD4 and CD8 stretch occupies residues 2-72 (GCGCSSHPED…DNLVIALHSY (71 aa)). 2 S-palmitoyl cysteine lipidation sites follow: C3 and C5. Positions 61-121 (LQDNLVIALH…PFNFVAKANS (61 aa)) constitute an SH3 domain. K99 participates in a covalent cross-link: Glycyl lysine isopeptide (Lys-Gly) (interchain with G-Cter in ubiquitin). Position 102 is a phosphoserine (S102). Residues 127–224 (WFFKNLSRKD…GLCTRLSRPC (98 aa)) form the SH2 domain. Positions 154–242 (RESESTAGSF…WWEDEWEVPR (89 aa)) are interaction with PTPRH. Phosphothreonine is present on T159. At S162 the chain carries Phosphoserine. At Y192 the chain carries Phosphotyrosine. Residue S194 is modified to Phosphoserine. The Protein kinase domain maps to 245 to 498 (LKLVERLGAG…YLRSVLEDFF (254 aa)). ATP contacts are provided by residues 251-259 (LGAGQFGEV) and K273. K276 participates in a covalent cross-link: Glycyl lysine isopeptide (Lys-Gly) (interchain with G-Cter in ubiquitin). The Proton acceptor role is filled by D364. Residue Y394 is modified to Phosphotyrosine; by autocatalysis. At Y505 the chain carries Phosphotyrosine; by CSK.

This sequence belongs to the protein kinase superfamily. Tyr protein kinase family. SRC subfamily. In terms of assembly, binds to the cytoplasmic domain of cell surface receptors, such as AXL, CD2, CD4, CD5, CD8, CD44, CD45 and CD122. Also binds to effector molecules, such as PI4K, VAV1, RASA1, FYB1 and to other protein kinases including CDK1, RAF1, ZAP70 and SYK. Binds to phosphatidylinositol 3'-kinase (PI3K) from T-lymphocytes through its SH3 domain and to the tyrosine phosphorylated form of KHDRBS1/p70 through its SH2 domain. This interaction inhibits its tyrosine-kinase activity. Interacts with SQSTM1. Interacts with phosphorylated LIME1. Interacts with CBLB and PTPRH. Interacts with RUNX3. Forms a signaling complex with EPHA1, PTK2B and PI3-KINASE; upon activation by EFNA1 which may regulate T-lymphocyte migration. Associates with ZAP70 and RHOH; these interactions allow LCK-mediated RHOH and CD3 subunit phosphorylation in the presence of functional ZAP70. Interacts with UNC119; this interaction plays a crucial role in activation of LCK. Interacts with CEACAM1 (via cytoplasmic domain); mediates CEACAM1 phosphorylation resulting in PTPN6 recruitment that dephosphorylates TCR stimulation-induced CD247 and ZAP70. Interacts with CD160. Interacts with CD48. As to quaternary structure, (Microbial infection) Interacts with herpes simplex virus 1 UL46; this interaction activates LCK. (Microbial infection) Interacts with HIV-1 Nef through its SH3 domain. In terms of processing, autophosphorylated on Tyr-394, increasing enzymatic activity, this site is dephosphorylated by PTN22. Phosphorylated on Tyr-505 by CSK, decreasing activity. Dephosphorylated by PTPRC/CD45. Dephosphorylation at Tyr-394 by PTPN2 negatively regulates T-cell receptor signaling. Dephosphorylation at Tyr-394 by DUSP22 negatively regulates T-cell receptor signaling. Post-translationally, myristoylation is required prior to palmitoylation. Palmitoylation regulates association with the plasma membrane and could be mediated by ZDHHC2. In terms of processing, 'Lys-63'-linked ubiquitinated at Lys-99 and Lys-276 by UBR2; this modification is required for autophosphorylation at Tyr-394. Expressed specifically in lymphoid cells.

The protein resides in the cell membrane. It localises to the cytoplasm. Its subcellular location is the cytosol. The catalysed reaction is L-tyrosyl-[protein] + ATP = O-phospho-L-tyrosyl-[protein] + ADP + H(+). With respect to regulation, the relative activities of the inhibitory tyrosine-protein kinase CSK and the activating tyrosine-protein phosphatase PTPRC/CD45 determine the level of LCK activity. These interactions allow rapid and efficient activation of LCK in response to TCR stimulation. Its function is as follows. Non-receptor tyrosine-protein kinase that plays an essential role in the selection and maturation of developing T-cells in the thymus and in the function of mature T-cells. Plays a key role in T-cell antigen receptor (TCR)-linked signal transduction pathways. Constitutively associated with the cytoplasmic portions of the CD4 and CD8 surface receptors. Association of the TCR with a peptide antigen-bound MHC complex facilitates the interaction of CD4 and CD8 with MHC class II and class I molecules, respectively, thereby recruiting the associated LCK protein to the vicinity of the TCR/CD3 complex. LCK then phosphorylates tyrosine residues within the immunoreceptor tyrosine-based activation motifs (ITAM) of the cytoplasmic tails of the TCR-gamma chains and CD3 subunits, initiating the TCR/CD3 signaling pathway. Once stimulated, the TCR recruits the tyrosine kinase ZAP70, that becomes phosphorylated and activated by LCK. Following this, a large number of signaling molecules are recruited, ultimately leading to lymphokine production. LCK also contributes to signaling by other receptor molecules. Associates directly with the cytoplasmic tail of CD2, which leads to hyperphosphorylation and activation of LCK. Also plays a role in the IL2 receptor-linked signaling pathway that controls the T-cell proliferative response. Binding of IL2 to its receptor results in increased activity of LCK. Is expressed at all stages of thymocyte development and is required for the regulation of maturation events that are governed by both pre-TCR and mature alpha beta TCR. Phosphorylates other substrates including RUNX3, PTK2B/PYK2, the microtubule-associated protein MAPT, RHOH or TYROBP. Interacts with FYB2. The protein is Tyrosine-protein kinase Lck (LCK) of Homo sapiens (Human).